The primary structure comprises 435 residues: GTPase Obg (435 aa).

The 159-residue stretch at 6-164 (ADFVDRVKIF…RWLELELKIL (159 aa)) folds into the Obg domain. Residues 165–335 (ADVGLVGYPN…LVSKLASIVR (171 aa)) form the OBG-type G domain. GTP is bound by residues 171-178 (GYPNVGKS), 196-200 (FTTLI), 217-220 (DIPG), 287-290 (NKID), and 316-318 (SAV). The Mg(2+) site is built by Ser-178 and Thr-198. Residues 357–435 (RRLPEKFHLE…IGDFEFEYRE (79 aa)) form the OCT domain.

The protein belongs to the TRAFAC class OBG-HflX-like GTPase superfamily. OBG GTPase family. As to quaternary structure, monomer. Mg(2+) is required as a cofactor.

The protein resides in the cytoplasm. An essential GTPase which binds GTP, GDP and possibly (p)ppGpp with moderate affinity, with high nucleotide exchange rates and a fairly low GTP hydrolysis rate. Plays a role in control of the cell cycle, stress response, ribosome biogenesis and in those bacteria that undergo differentiation, in morphogenesis control. This Thermotoga maritima (strain ATCC 43589 / DSM 3109 / JCM 10099 / NBRC 100826 / MSB8) protein is GTPase Obg.